Here is an 81-residue protein sequence, read N- to C-terminus: Cytochrome b559 subunit alpha (81 aa).

The helical transmembrane segment at 21 to 35 threads the bilayer; it reads VIHSVTIPSLFVGGW. Histidine 23 is a binding site for heme.

Belongs to the PsbE/PsbF family. In terms of assembly, heterodimer of an alpha subunit and a beta subunit. PSII is composed of 1 copy each of membrane proteins PsbA, PsbB, PsbC, PsbD, PsbE, PsbF, PsbH, PsbI, PsbJ, PsbK, PsbL, PsbM, PsbT, PsbY, PsbZ, Psb30/Ycf12, at least 3 peripheral proteins of the oxygen-evolving complex and a large number of cofactors. It forms dimeric complexes. The cofactor is heme b.

Its subcellular location is the plastid. The protein localises to the chloroplast thylakoid membrane. In terms of biological role, this b-type cytochrome is tightly associated with the reaction center of photosystem II (PSII). PSII is a light-driven water:plastoquinone oxidoreductase that uses light energy to abstract electrons from H(2)O, generating O(2) and a proton gradient subsequently used for ATP formation. It consists of a core antenna complex that captures photons, and an electron transfer chain that converts photonic excitation into a charge separation. This chain is Cytochrome b559 subunit alpha, found in Euglena gracilis.